The chain runs to 176 residues: Nucleoside triphosphate/diphosphate phosphatase (176 aa).

Catalysis depends on Arg-23, which acts as the Proton donor. Mg(2+) is bound by residues Asn-87, Asp-103, Asp-105, Asp-107, Asp-120, and Glu-123.

Belongs to the Ntdp family. Mg(2+) serves as cofactor.

The enzyme catalyses a ribonucleoside 5'-triphosphate + H2O = a ribonucleoside 5'-diphosphate + phosphate + H(+). The catalysed reaction is a ribonucleoside 5'-diphosphate + H2O = a ribonucleoside 5'-phosphate + phosphate + H(+). In terms of biological role, has nucleoside phosphatase activity towards nucleoside triphosphates and nucleoside diphosphates. The sequence is that of Nucleoside triphosphate/diphosphate phosphatase from Bacillus pumilus (strain SAFR-032).